A 518-amino-acid chain; its full sequence is Type II methyltransferase M.HindII (518 aa).

The protein belongs to the N(4)/N(6)-methyltransferase family.

It carries out the reaction a 2'-deoxyadenosine in DNA + S-adenosyl-L-methionine = an N(6)-methyl-2'-deoxyadenosine in DNA + S-adenosyl-L-homocysteine + H(+). Functionally, a gamma subtype methylase, recognizes the double-stranded sequence 5'-GTYRAC-3', methylates A-5 on both strands, and protects the DNA from cleavage by the HindII endonuclease. This chain is Type II methyltransferase M.HindII (hindIIM), found in Haemophilus influenzae (strain ATCC 51907 / DSM 11121 / KW20 / Rd).